We begin with the raw amino-acid sequence, 283 residues long: Thymidylate synthase (283 aa).

R22 serves as a coordination point for dUMP. The Nucleophile role is filled by C160. Residues R180–D183, N191, and H221–Y223 each bind dUMP. Residue D183 participates in (6R)-5,10-methylene-5,6,7,8-tetrahydrofolate binding. A282 lines the (6R)-5,10-methylene-5,6,7,8-tetrahydrofolate pocket.

The protein belongs to the thymidylate synthase family. Bacterial-type ThyA subfamily. As to quaternary structure, homodimer.

It is found in the cytoplasm. The enzyme catalyses dUMP + (6R)-5,10-methylene-5,6,7,8-tetrahydrofolate = 7,8-dihydrofolate + dTMP. Its pathway is pyrimidine metabolism; dTTP biosynthesis. Functionally, catalyzes the reductive methylation of 2'-deoxyuridine-5'-monophosphate (dUMP) to 2'-deoxythymidine-5'-monophosphate (dTMP) while utilizing 5,10-methylenetetrahydrofolate (mTHF) as the methyl donor and reductant in the reaction, yielding dihydrofolate (DHF) as a by-product. This enzymatic reaction provides an intracellular de novo source of dTMP, an essential precursor for DNA biosynthesis. This is Thymidylate synthase from Colwellia psychrerythraea (strain 34H / ATCC BAA-681) (Vibrio psychroerythus).